Here is a 23-residue protein sequence, read N- to C-terminus: Brevinin-1SE (23 aa).

A disulfide bond links cysteine 17 and cysteine 23.

As to expression, expressed by the skin glands.

It localises to the secreted. Mast cell degranulating peptide. Causes histamine release from rat peritoneal mast cells in vitro. Has antibacterial activity against the Gram-negative bacterium E.coli K12 and Gram-positive bacterium M.luteus NCT C2665. This Lithobates sevosus (Dusky gopher frog) protein is Brevinin-1SE.